The following is a 135-amino-acid chain: Protein PsiE homolog (135 aa).

Transmembrane regions (helical) follow at residues 13 to 33 (VLQW…VIFL), 54 to 74 (YMLV…ALIV), 82 to 102 (HFPL…LIIV), and 107 to 127 (PNDT…LYLA).

Belongs to the PsiE family.

Its subcellular location is the cell inner membrane. This chain is Protein PsiE homolog, found in Edwardsiella ictaluri (strain 93-146).